Reading from the N-terminus, the 120-residue chain is Large ribosomal subunit protein uL18 (120 aa).

This sequence belongs to the universal ribosomal protein uL18 family. Part of the 50S ribosomal subunit; part of the 5S rRNA/L5/L18/L25 subcomplex. Contacts the 5S and 23S rRNAs.

This is one of the proteins that bind and probably mediate the attachment of the 5S RNA into the large ribosomal subunit, where it forms part of the central protuberance. The polypeptide is Large ribosomal subunit protein uL18 (Bordetella bronchiseptica (strain ATCC BAA-588 / NCTC 13252 / RB50) (Alcaligenes bronchisepticus)).